We begin with the raw amino-acid sequence, 145 residues long: Bacilliredoxin GK1781 (145 aa).

The protein belongs to the bacilliredoxin family.

The sequence is that of Bacilliredoxin GK1781 from Geobacillus kaustophilus (strain HTA426).